The chain runs to 1317 residues: MLDVNFFDELRIGLATADDIRNWSFGEVKKPETINYRTLKPEKDGLFCEKIFGPTRDWECYCGKYKRVRFKGIICERCGVEVTRAKVRRERMGHIELAAPVTHIWYFKGVPSRLGYLLDLAPKDLEKIIYFAAYVITAVDDEMRHNELSTLEAEMAVERKAIEDQRDADLEARAQKLEADMKELEDEGAKSDVKRKVRDGGEREMRQLRDRAQRELDRLEEIWTTFTKLAPKQLIVDELLYRELQDRYGEYFEGAMGAESIKKLIENFDIDAEAESLRDTIKNGKGQKKLRALKRLKVVAAFQTNRNSPMGMVLDAVPVIPPELRPMVQLDGGRFATSDLNDLYRRVINRNNRLKRLIDLGAPEIIVNNEKRMLQESVDALFDNGRRGRPVTGPGNRPLKSLSDLLKGKQGRFRQNLLGKRVDYSGRSVIVVGPQLKLHQCGLPKLMALELFKPFVMKRLVDLNHAQNIKSAKRMVERQRPQVWDVLEEVIAEHPVLLNRAPTLHRLGIQAFEPQLVEGKAIQLHPLVCEAFNADFDGDQMAVHLPLSAEAQAEARILMLSSNNILSPASGRPLAMPRLDMVTGLYFLTTEIEGDTGEFTPAAKDQPESGVYSSPAEAIMALDRGALSVRAKIRVRLTQLRPPAEIEAERFPDGWNMGDAWTAETTLGRVLFNELLPRGYPFVNKQMHKKVQAAIINDLAERYPMIVVAQTVDKLKDAGFYWATRSGVTVSMADVLVPPEKQEILERYEAEADSIEKQYQRGKLNKDERNEALVKIWQDATEEVGQALRSHYPKDNPIITIVDSGATGNFTQTRTLAGMKGLVTNPKGEFIPRPIKSSFREGLTVLEYFINTHGARKGLADTALRTADSGYLTRRLVDVSQDVIVRETDCETERGITVTLAEKQADGTLVRDQHIETSAYARTLATDAVDAKGNVIVERGHDLGDPAIDALLAAGITEVKVRSVLTCGTGTGVCAMCYGRSMATGKLVDIGEAVGIVAAQSIGEPGTQLTMRTFHQGGVTGGADIVGGLPRVQELFEARIPRNRAPIADVSGRIRLEESDKFYKITIVPDDGGEEVVYDKLSRRQRLKVFKHDDGSERLLTDGDHVEVGQQLLEGSADPHEVLRVQGPREVQIHLVKEVQEVYRAQGVSIHDKHIEVIVRQMLRRVTIIDSGATEFLPGSLTERGEFETENRRVVAEGGEPAAGRPVLMGITKASLATDSWLSAASFQETTRVLTDAAINCRSDKLQGLKENVIIGKLIPAGTGINRYRNIQVQPTEEARAAAYTIPSYEDQYYSPDFGQATGAAVPLDDYGYSDYR.

Zn(2+) contacts are provided by Cys60, Cys62, Cys75, and Cys78. The disordered stretch occupies residues Glu183–Arg209. Mg(2+) contacts are provided by Asp535, Asp537, and Asp539. The Zn(2+) site is built by Cys890, Cys967, Cys974, and Cys977.

The protein belongs to the RNA polymerase beta' chain family. The RNAP catalytic core consists of 2 alpha, 1 beta, 1 beta' and 1 omega subunit. When a sigma factor is associated with the core the holoenzyme is formed, which can initiate transcription. Requires Mg(2+) as cofactor. Zn(2+) serves as cofactor.

It catalyses the reaction RNA(n) + a ribonucleoside 5'-triphosphate = RNA(n+1) + diphosphate. DNA-dependent RNA polymerase catalyzes the transcription of DNA into RNA using the four ribonucleoside triphosphates as substrates. The polypeptide is DNA-directed RNA polymerase subunit beta' (Mycolicibacterium vanbaalenii (strain DSM 7251 / JCM 13017 / BCRC 16820 / KCTC 9966 / NRRL B-24157 / PYR-1) (Mycobacterium vanbaalenii)).